The following is a 787-amino-acid chain: Penicillin-binding protein 1A (787 aa).

Residues 1-6 (MYKSLF) are Cytoplasmic-facing. The helical; Signal-anchor for type II membrane protein transmembrane segment at 7–27 (LCLKIFAVLILIGCSVTAYII) threads the bilayer. Over 28-787 (YHYSHDLPDY…GMLDQSQEIY (760 aa)) the chain is Periplasmic. The tract at residues 49–220 (TRIYSRDGKL…SELNPDKNYS (172 aa)) is transglycosylase. The active-site Proton donor; for transglycosylase activity is glutamate 87. Positions 398 to 711 (DVIVVEPIKD…SNVVLPIFID (314 aa)) are transpeptidase. Residue serine 457 is the Acyl-ester intermediate; for transpeptidase activity of the active site.

It in the N-terminal section; belongs to the glycosyltransferase 51 family. The protein in the C-terminal section; belongs to the transpeptidase family.

It is found in the cell inner membrane. It catalyses the reaction [GlcNAc-(1-&gt;4)-Mur2Ac(oyl-L-Ala-gamma-D-Glu-L-Lys-D-Ala-D-Ala)](n)-di-trans,octa-cis-undecaprenyl diphosphate + beta-D-GlcNAc-(1-&gt;4)-Mur2Ac(oyl-L-Ala-gamma-D-Glu-L-Lys-D-Ala-D-Ala)-di-trans,octa-cis-undecaprenyl diphosphate = [GlcNAc-(1-&gt;4)-Mur2Ac(oyl-L-Ala-gamma-D-Glu-L-Lys-D-Ala-D-Ala)](n+1)-di-trans,octa-cis-undecaprenyl diphosphate + di-trans,octa-cis-undecaprenyl diphosphate + H(+). The enzyme catalyses Preferential cleavage: (Ac)2-L-Lys-D-Ala-|-D-Ala. Also transpeptidation of peptidyl-alanyl moieties that are N-acyl substituents of D-alanine.. The protein operates within cell wall biogenesis; peptidoglycan biosynthesis. Functionally, cell wall formation. Synthesis of cross-linked peptidoglycan from the lipid intermediates. The enzyme has a penicillin-insensitive transglycosylase N-terminal domain (formation of linear glycan strands) and a penicillin-sensitive transpeptidase C-terminal domain (cross-linking of the peptide subunits). This is Penicillin-binding protein 1A (mrcA) from Rickettsia prowazekii (strain Madrid E).